Here is a 43-residue protein sequence, read N- to C-terminus: Iota-conotoxin-like S11.2 (43 aa).

Intrachain disulfides connect Cys2–Cys16, Cys9–Cys19, Cys15–Cys24, and Cys18–Cys35. At Met41 the chain carries D-methionine. Arg43 is a propeptide (removed by a carboxypeptidase).

This sequence belongs to the conotoxin I1 superfamily. In terms of tissue distribution, expressed by the venom duct.

The protein resides in the secreted. In terms of biological role, iota-conotoxins bind to voltage-gated sodium channels (Nav) and act as agonists by shifting the voltage-dependence of activation to more hyperpolarized levels. Produces general excitatory symptoms. The chain is Iota-conotoxin-like S11.2 from Conus striatus (Striated cone).